We begin with the raw amino-acid sequence, 286 residues long: Flagellar filament 33 kDa core protein (286 aa).

This sequence belongs to the bacterial flagellin family. In terms of assembly, the flagellum consists of an outer layer composed of repeating units of FlaA around a core that contains several antigenically related polypeptides.

The protein localises to the periplasmic flagellum. Its subcellular location is the periplasm. Functionally, component of the core of the flagella. This is Flagellar filament 33 kDa core protein from Treponema phagedenis.